The primary structure comprises 433 residues: Dihydrolipoyllysine-residue acetyltransferase component of pyruvate dehydrogenase complex (433 aa).

One can recognise a Lipoyl-binding domain in the interval 2-77 (AFEFRLPDIG…VVGDVIVKID (76 aa)). Lys-43 bears the N6-lipoyllysine mark. 2 disordered regions span residues 80–134 (DAEE…PSVR) and 164–204 (YLNG…FPET). Composition is skewed to basic and acidic residues over residues 84–103 (MQFK…KEQE) and 117–126 (EKTEVDESKT). One can recognise a Peripheral subunit-binding (PSBD) domain in the interval 128–165 (KAMPSVRKYARENGVNIKAVNGSGKNGRITKEDIDAYL). Over residues 166 to 188 (NGGSSEEGSNTSVASESTSSDVV) the composition is skewed to low complexity. Residue His-404 is part of the active site.

It belongs to the 2-oxoacid dehydrogenase family. As to quaternary structure, forms a 24-polypeptide structural core with octahedral symmetry. It depends on (R)-lipoate as a cofactor.

The catalysed reaction is N(6)-[(R)-dihydrolipoyl]-L-lysyl-[protein] + acetyl-CoA = N(6)-[(R)-S(8)-acetyldihydrolipoyl]-L-lysyl-[protein] + CoA. In terms of biological role, the pyruvate dehydrogenase complex catalyzes the overall conversion of pyruvate to acetyl-CoA and CO(2). It contains multiple copies of three enzymatic components: pyruvate dehydrogenase (E1), dihydrolipoamide acetyltransferase (E2) and lipoamide dehydrogenase (E3). The protein is Dihydrolipoyllysine-residue acetyltransferase component of pyruvate dehydrogenase complex (pdhC) of Staphylococcus epidermidis (strain ATCC 12228 / FDA PCI 1200).